A 141-amino-acid chain; its full sequence is Putative nickel-responsive regulator (141 aa).

4 residues coordinate Ni(2+): His80, His91, His93, and Cys99.

The protein belongs to the transcriptional regulatory CopG/NikR family. The cofactor is Ni(2+).

In terms of biological role, transcriptional regulator. This chain is Putative nickel-responsive regulator, found in Methanococcus vannielii (strain ATCC 35089 / DSM 1224 / JCM 13029 / OCM 148 / SB).